The primary structure comprises 189 residues: MFWLLALLAYLLGSLSFAIVLSRLSGSPDPRSSGSGNAGATNMLRLAGRKLAILTLLGDLCKGLLPVLLARAAGLDLHAQAWVGICAVLGHLFPLYFRFKGGKGVATAAGMLMALYFPAALLAIGAWLLTFYLTRTSSLAALIATPLTLPLLAWREPEALLPISVLTVMIVWRHRNNLRDLFAGRERHF.

The next 5 helical transmembrane spans lie at 1 to 21 (MFWL…AIVL), 50 to 70 (KLAI…VLLA), 77 to 97 (LHAQ…PLYF), 111 to 131 (MLMA…LLTF), and 151 to 171 (LLAW…VMIV).

The protein belongs to the PlsY family. In terms of assembly, probably interacts with PlsX.

The protein localises to the cell inner membrane. It catalyses the reaction an acyl phosphate + sn-glycerol 3-phosphate = a 1-acyl-sn-glycero-3-phosphate + phosphate. It participates in lipid metabolism; phospholipid metabolism. Its function is as follows. Catalyzes the transfer of an acyl group from acyl-phosphate (acyl-PO(4)) to glycerol-3-phosphate (G3P) to form lysophosphatidic acid (LPA). This enzyme utilizes acyl-phosphate as fatty acyl donor, but not acyl-CoA or acyl-ACP. The chain is Glycerol-3-phosphate acyltransferase from Pseudomonas putida (strain ATCC 47054 / DSM 6125 / CFBP 8728 / NCIMB 11950 / KT2440).